The following is a 126-amino-acid chain: Large ribosomal subunit protein bL17 (126 aa).

This sequence belongs to the bacterial ribosomal protein bL17 family. Part of the 50S ribosomal subunit. Contacts protein L32.

The protein is Large ribosomal subunit protein bL17 of Coxiella burnetii (strain CbuK_Q154) (Coxiella burnetii (strain Q154)).